We begin with the raw amino-acid sequence, 449 residues long: Probable glucuronosyltransferase 47 A (449 aa).

Topologically, residues 1–31 (MEHPLECADSCSLAMSWFCNKKCRGWGLMKR) are cytoplasmic. A helical; Signal-anchor for type II membrane protein transmembrane segment spans residues 32 to 52 (TVVASGLRSVVLLLLFIYFVQ). Topologically, residues 53–449 (DVTAEMGHQR…GDLYPWGNDL (397 aa)) are lumenal. Residues Asn172 and Asn433 are each glycosylated (N-linked (GlcNAc...) asparagine).

The protein belongs to the glycosyltransferase 47 family. Mostly expressed in newly formed or expanding tissues.

The protein localises to the golgi apparatus membrane. In terms of biological role, involved in the synthesis of glucuronoxylan hemicellulose in secondary cell walls. This Physcomitrium patens (Spreading-leaved earth moss) protein is Probable glucuronosyltransferase 47 A.